The primary structure comprises 256 residues: 1-(5-phosphoribosyl)-5-[(5-phosphoribosylamino)methylideneamino] imidazole-4-carboxamide isomerase (256 aa).

D8 acts as the Proton acceptor in catalysis. The Proton donor role is filled by D130.

It belongs to the HisA/HisF family.

It localises to the cytoplasm. It carries out the reaction 1-(5-phospho-beta-D-ribosyl)-5-[(5-phospho-beta-D-ribosylamino)methylideneamino]imidazole-4-carboxamide = 5-[(5-phospho-1-deoxy-D-ribulos-1-ylimino)methylamino]-1-(5-phospho-beta-D-ribosyl)imidazole-4-carboxamide. The protein operates within amino-acid biosynthesis; L-histidine biosynthesis; L-histidine from 5-phospho-alpha-D-ribose 1-diphosphate: step 4/9. The chain is 1-(5-phosphoribosyl)-5-[(5-phosphoribosylamino)methylideneamino] imidazole-4-carboxamide isomerase from Pelodictyon phaeoclathratiforme (strain DSM 5477 / BU-1).